We begin with the raw amino-acid sequence, 538 residues long: Putative outer membrane porin BglH (538 aa).

A signal peptide spans 1–25; that stretch reads MFRRNIITSAILLMAPLAFSAQSLA.

The protein belongs to the porin LamB (TC 1.B.3) family.

The protein resides in the cell outer membrane. Functionally, may be a sugar porin with a broad carbohydrate specificity. This chain is Putative outer membrane porin BglH (bglH), found in Escherichia coli O6:K15:H31 (strain 536 / UPEC).